The following is a 250-amino-acid chain: Triosephosphate isomerase (250 aa).

Substrate is bound at residue asparagine 9–lysine 11. Histidine 95 functions as the Electrophile in the catalytic mechanism. Residue glutamate 167 is the Proton acceptor of the active site. Residues glycine 173, serine 212, and glycine 233 to glycine 234 each bind substrate.

It belongs to the triosephosphate isomerase family. In terms of assembly, homodimer.

It is found in the cytoplasm. It carries out the reaction D-glyceraldehyde 3-phosphate = dihydroxyacetone phosphate. It functions in the pathway carbohydrate biosynthesis; gluconeogenesis. The protein operates within carbohydrate degradation; glycolysis; D-glyceraldehyde 3-phosphate from glycerone phosphate: step 1/1. Involved in the gluconeogenesis. Catalyzes stereospecifically the conversion of dihydroxyacetone phosphate (DHAP) to D-glyceraldehyde-3-phosphate (G3P). In Endomicrobium trichonymphae, this protein is Triosephosphate isomerase.